The following is a 303-amino-acid chain: tRNA pseudouridine synthase B (303 aa).

The active-site Nucleophile is D47.

Belongs to the pseudouridine synthase TruB family. Type 1 subfamily.

It catalyses the reaction uridine(55) in tRNA = pseudouridine(55) in tRNA. In terms of biological role, responsible for synthesis of pseudouridine from uracil-55 in the psi GC loop of transfer RNAs. The protein is tRNA pseudouridine synthase B of Legionella pneumophila (strain Paris).